An 85-amino-acid polypeptide reads, in one-letter code: U4-theraphotoxin-Hhn1r (85 aa).

Residues Met1–Ala22 form the signal peptide. The propeptide occupies Glu23–Arg48. Disulfide bonds link Cys52–Cys66, Cys56–Cys77, and Cys71–Cys82.

The protein belongs to the neurotoxin 12 (Hwtx-2) family. 02 (Hwtx-2) subfamily. As to expression, expressed by the venom gland.

Its subcellular location is the secreted. Its function is as follows. Postsynaptic neurotoxin. In Cyriopagopus hainanus (Chinese bird spider), this protein is U4-theraphotoxin-Hhn1r.